We begin with the raw amino-acid sequence, 505 residues long: MAERKVRVRFAPSPTGALHIGGVRTALYNYLFARQHGGDLIFRIEDTDSNRFVPGAEEYILESFKWLGIQFDEGVSFGGEYGPYRQSERREIYKKYVQVLLDNGKAYIAFDTPEELDAKRAEIANFQYDASTRVGMRNSLTLPKEEVEALIADGKQYVVRFKIEPNEDIHVNDLIRGEVVINSSILDDKVLYKSADELPTYHLANIVDDHLMEVSHVIRGEEWLPSAPLHVLLYRAFGWEDTMPAFAHLPLLLKPEGNGKLSKRDGDRLGFPVFPLEWHDPKSGEISSGYRESGYLPEAVINFLALLGWNPGNDQEVMSMDELIRLFDLHRCSKSGAKFDYKKGIWFNHTYIQQKSDKEIAELFVPVLKEHGVEAPFEKVVTVVGMMKDRVSFVKELWEVCSFFFVAPTEYDEKTVKKRWKEDSAKCMTELAEVLAGIEDFSIEGQEKIVMDWIAEKGYHTGNIMNAFRLTLVGEGKGPHMFDISWVLGKEETLARMKRAVEVLK.

Positions P12–G22 match the 'HIGH' region motif. The short motif at K260–R264 is the 'KMSKS' region element. ATP is bound at residue K263.

Belongs to the class-I aminoacyl-tRNA synthetase family. Glutamate--tRNA ligase type 1 subfamily. Monomer.

It localises to the cytoplasm. It catalyses the reaction tRNA(Glu) + L-glutamate + ATP = L-glutamyl-tRNA(Glu) + AMP + diphosphate. Its function is as follows. Catalyzes the attachment of glutamate to tRNA(Glu) in a two-step reaction: glutamate is first activated by ATP to form Glu-AMP and then transferred to the acceptor end of tRNA(Glu). The polypeptide is Glutamate--tRNA ligase (Bacteroides fragilis (strain ATCC 25285 / DSM 2151 / CCUG 4856 / JCM 11019 / LMG 10263 / NCTC 9343 / Onslow / VPI 2553 / EN-2)).